Reading from the N-terminus, the 447-residue chain is Argininosuccinate synthase (447 aa).

ATP is bound by residues 20–28 (AFSGGLDTS) and Ala-46. Tyr-102 lines the L-citrulline pocket. 2 residues coordinate ATP: Gly-132 and Thr-134. Thr-134, Asn-138, and Asp-139 together coordinate L-aspartate. Asn-138 lines the L-citrulline pocket. Asp-139 is an ATP binding site. Residues Arg-142 and Ser-195 each contribute to the L-citrulline site. Residue Asp-197 participates in ATP binding. 3 residues coordinate L-citrulline: Thr-204, Glu-206, and Glu-283.

It belongs to the argininosuccinate synthase family. Type 2 subfamily. In terms of assembly, homotetramer.

The protein resides in the cytoplasm. The catalysed reaction is L-citrulline + L-aspartate + ATP = 2-(N(omega)-L-arginino)succinate + AMP + diphosphate + H(+). Its pathway is amino-acid biosynthesis; L-arginine biosynthesis; L-arginine from L-ornithine and carbamoyl phosphate: step 2/3. The polypeptide is Argininosuccinate synthase (argG) (Neisseria meningitidis serogroup A / serotype 4A (strain DSM 15465 / Z2491)).